The primary structure comprises 869 residues: TATA box-binding protein-associated factor RNA polymerase I subunit C (869 aa).

Disordered stretches follow at residues 605 to 629 (SSLR…ASWT) and 729 to 869 (GAAW…RMGF). The residue at position 834 (T834) is a Phosphothreonine. Residues 835-860 (PPHSQASSVRATRSQQHTPVLSSSQP) are compositionally biased toward polar residues. S848 carries the phosphoserine modification.

In terms of assembly, component of the transcription factor SL1/TIF-IB complex, composed of TBP and at least TAF1A, TAF1B, TAF1C and TAF1D. In the complex interacts directly with TBP, TAF1A and TAF1B. Interaction of the SL1/TIF-IB subunits with TBP excludes interaction of TBP with the transcription factor IID (TFIID) subunits. Interacts with MYC and RRN3. Interacts with p53/TP53; the interaction prevents the association of SL1/TIF-IB with UBTF and represses RNA polymerase I transcription. Part of Pol I pre-initiation complex (PIC), in which Pol I core assembles with RRN3 and promoter-bound UTBF and SL1/TIF-IB complex.

Its subcellular location is the nucleus. It localises to the nucleolus. Component of the transcription factor SL1/TIF-IB complex, which is involved in the assembly of the PIC (pre-initiation complex) during RNA polymerase I-dependent transcription. The rate of PIC formation probably is primarily dependent on the rate of association of SL1/TIF-IB with the rDNA promoter. SL1/TIF-IB is involved in stabilization of nucleolar transcription factor 1/UBTF on rDNA. Formation of SL1/TIF-IB excludes the association of TBP with TFIID subunits. Recruits RNA polymerase I to the rRNA gene promoter via interaction with RRN3. This Homo sapiens (Human) protein is TATA box-binding protein-associated factor RNA polymerase I subunit C (TAF1C).